The chain runs to 194 residues: Phosphoheptose isomerase (194 aa).

The SIS domain occupies 37 to 194 (ISNSFKQGGK…LIEFEMAKQA (158 aa)). Residue 52–54 (NGG) participates in substrate binding. His61 and Glu65 together coordinate Zn(2+). Substrate contacts are provided by residues Glu65, 93-94 (ND), 119-121 (STS), Ser124, and Gln172. Zn(2+)-binding residues include Gln172 and His180.

The protein belongs to the SIS family. GmhA subfamily. In terms of assembly, homotetramer. The cofactor is Zn(2+).

The protein resides in the cytoplasm. It carries out the reaction 2 D-sedoheptulose 7-phosphate = D-glycero-alpha-D-manno-heptose 7-phosphate + D-glycero-beta-D-manno-heptose 7-phosphate. It participates in carbohydrate biosynthesis; D-glycero-D-manno-heptose 7-phosphate biosynthesis; D-glycero-alpha-D-manno-heptose 7-phosphate and D-glycero-beta-D-manno-heptose 7-phosphate from sedoheptulose 7-phosphate: step 1/1. The protein operates within bacterial outer membrane biogenesis; LOS core biosynthesis. Its function is as follows. Catalyzes the isomerization of sedoheptulose 7-phosphate in D-glycero-D-manno-heptose 7-phosphate. In Haemophilus influenzae (strain ATCC 51907 / DSM 11121 / KW20 / Rd), this protein is Phosphoheptose isomerase.